The chain runs to 245 residues: tRNA pseudouridine synthase A (245 aa).

The active-site Nucleophile is the D52. Y111 is a substrate binding site.

Belongs to the tRNA pseudouridine synthase TruA family. Homodimer.

It catalyses the reaction uridine(38/39/40) in tRNA = pseudouridine(38/39/40) in tRNA. Its function is as follows. Formation of pseudouridine at positions 38, 39 and 40 in the anticodon stem and loop of transfer RNAs. The chain is tRNA pseudouridine synthase A from Rhodopseudomonas palustris (strain BisB5).